A 1050-amino-acid chain; its full sequence is Zinc finger and BTB domain-containing protein 11 (1050 aa).

Residues 143-156 show a composition bias toward acidic residues; it reads LDSGEESNESEDDL. The segment at 143 to 173 is disordered; the sequence is LDSGEESNESEDDLSNFTSPPSTASKSSKKK. Over residues 157 to 168 the composition is skewed to low complexity; the sequence is SNFTSPPSTASK. Residues 214 to 282 form the BTB domain; it reads CDVTLLIEGE…AYTSVLSFDF (69 aa). Disordered regions lie at residues 373–514 and 543–563; these read AEQN…EGGY and LVQR…STEE. Positions 378–399 are enriched in low complexity; the sequence is EPEQQPAPQASPEAEASVSPVE. Composition is skewed to basic and acidic residues over residues 478–501 and 553–563; these read SKDE…DTYR and PKRDAKESTEE. C2H2-type zinc fingers lie at residues 566–588 and 594–616; these read HKCG…TLKH and YKCP…LIRH. Residues 617-641 are disordered; sequence TRKEAPTSSSSNSTSTEASGGSSEK. Residues 623 to 638 show a composition bias toward low complexity; it reads TSSSSNSTSTEASGGS. C2H2-type zinc fingers lie at residues 648–670, 676–698, 704–726, 732–754, 763–785, 791–813, 819–843, 855–877, 883–905, and 911–934; these read FICS…MLKH, HACQ…QSLH, FQCE…MSIH, YFCS…LKKH, YHCT…MNKH, FQCQ…VKSH, YRCN…KATH, RVCD…MNNH, FECL…VRTH, and YVCP…TKFH.

It localises to the nucleus. The protein resides in the nucleolus. Functionally, may be involved in transcriptional regulation. In Mus musculus (Mouse), this protein is Zinc finger and BTB domain-containing protein 11.